A 505-amino-acid polypeptide reads, in one-letter code: Tyrosine-protein kinase Blk (505 aa).

Positions 1–37 are disordered; that stretch reads MGLVSSKKPDKEKPIKEKDKGQWSPLKVSAQDKDAPP. Gly-2 carries the N-myristoyl glycine lipid modification. The span at 7-21 shows a compositional bias: basic and acidic residues; sequence KKPDKEKPIKEKDKG. In terms of domain architecture, SH3 spans 58–118; sequence EDKHFVVALY…PSNFVARVES (61 aa). In terms of domain architecture, SH2 spans 124–220; the sequence is WFFRSQGRKE…GLCQRLTLPC (97 aa). The 254-residue stretch at 241 to 494 folds into the Protein kinase domain; it reads LRLVRKLGSG…FLQSVLEDFY (254 aa). ATP is bound by residues 247 to 255 and Lys-269; that span reads LGSGQFGEV. Asp-360 functions as the Proton acceptor in the catalytic mechanism. Tyr-389 bears the Phosphotyrosine; by autocatalysis mark.

Belongs to the protein kinase superfamily. Tyr protein kinase family. SRC subfamily. As to quaternary structure, interacts with CBL (via SH2 domain). Interacts with CD79A and CD79B (via SH2 domain). Post-translationally, phosphorylated on tyrosine residues after antibody-mediated surface engagement of the B-cell antigen receptor (BCR). In terms of processing, ubiquitination of activated BLK by the UBE3A ubiquitin protein ligase leads to its degradation by the ubiquitin-proteasome pathway. Expressed in lymphatic organs, pancreatic islets, Leydig cells, striate ducts of salivary glands and hair follicles.

It is found in the cell membrane. The enzyme catalyses L-tyrosyl-[protein] + ATP = O-phospho-L-tyrosyl-[protein] + ADP + H(+). With respect to regulation, antibody-mediated surface engagement of the B-cell antigen receptor (BCR) which results in the phosphorylation of BLK on tyrosine residues, stimulates the enzymatic activity. Functionally, non-receptor tyrosine kinase involved in B-lymphocyte development, differentiation and signaling. B-cell receptor (BCR) signaling requires a tight regulation of several protein tyrosine kinases and phosphatases, and associated coreceptors. Binding of antigen to the B-cell antigen receptor (BCR) triggers signaling that ultimately leads to B-cell activation. Signaling through BLK plays an important role in transmitting signals through surface immunoglobulins and supports the pro-B to pre-B transition, as well as the signaling for growth arrest and apoptosis downstream of B-cell receptor. Specifically binds and phosphorylates CD79A at 'Tyr-188'and 'Tyr-199', as well as CD79B at 'Tyr-196' and 'Tyr-207'. Also phosphorylates the immunoglobulin G receptors FCGR2A, FCGR2B and FCGR2C. With FYN and LYN, plays an essential role in pre-B-cell receptor (pre-BCR)-mediated NF-kappa-B activation. Also contributes to BTK activation by indirectly stimulating BTK intramolecular autophosphorylation. In pancreatic islets, acts as a modulator of beta-cells function through the up-regulation of PDX1 and NKX6-1 and consequent stimulation of insulin secretion in response to glucose. Phosphorylates CGAS, promoting retention of CGAS in the cytosol. The polypeptide is Tyrosine-protein kinase Blk (BLK) (Homo sapiens (Human)).